Here is a 505-residue protein sequence, read N- to C-terminus: Retinoic acid receptor gamma (505 aa).

Disordered regions lie at residues 1-57 (MMKF…SSKD) and 113-134 (SLSV…PSPP). 2 stretches are compositionally biased toward basic and acidic residues: residues 12 to 22 (DGGERPEEEGK) and 32 to 46 (MGKE…KEEA). The modulating stretch occupies residues 52 to 142 (MSSSKDRICS…PPPPPRVYKP (91 aa)). Polar residues predominate over residues 115–124 (SVETQSTSSE). NR C4-type zinc fingers lie at residues 143-163 (CFVC…CEGC) and 179-203 (CHRD…LQKC). A DNA-binding region (nuclear receptor) is located at residues 143–208 (CFVCNDKSSG…RLQKCFEVGM (66 aa)). Residues 209-237 (SKEAVRNDRNKKKKEIKEEVVTDSYEMPP) form a hinge region. Positions 238–472 (EMEALIQKVS…PLIREMLENP (235 aa)) constitute an NR LBD domain. The disordered stretch occupies residues 462 to 505 (PPLIREMLENPEAFEDDASPPPKSEQKPIKVEEKPGEKTSTKDP). Over residues 485–505 (SEQKPIKVEEKPGEKTSTKDP) the composition is skewed to basic and acidic residues.

It belongs to the nuclear hormone receptor family. NR1 subfamily. Heterodimer; with a RXR molecule. Binds DNA preferentially as a RAR/RXR heterodimer. In terms of tissue distribution, isoform Delta-1A and Isoform Delta-1B are most abundant in regenerating limbs, tails, and the anterior half of the lower jaw. Isoform Delta-2 is broadly and uniformly distributed.

Its subcellular location is the nucleus. In terms of biological role, receptor for retinoic acid. Retinoic acid receptors bind as heterodimers to their target response elements in response to their ligands, all-trans or 9-cis retinoic acid, and regulate gene expression in various biological processes. The RAR/RXR heterodimers bind to the retinoic acid response elements (RARE) composed of tandem 5'-AGGTCA-3' sites known as DR1-DR5. This chain is Retinoic acid receptor gamma (RARG), found in Notophthalmus viridescens (Eastern newt).